The sequence spans 349 residues: Delta(7)-sterol 5(6)-desaturase ERG3A (349 aa).

The next 3 membrane-spanning stretches (helical) occupy residues 84-104, 124-144, and 162-182; these read ITWI…YIFI, IIAA…FFLL, and LWYD…CIYW. The region spanning 170–296 is the Fatty acid hydroxylase domain; sequence PLFLLFTDFC…FTAFDRMGGT (127 aa). The Histidine box-1 signature appears at 184-188; the sequence is HRWLH. Residues 197 to 201 carry the Histidine box-2 motif; the sequence is HKLHH. Residues 227–247 traverse the membrane as a helical segment; the sequence is HIFPFIFPLQKMAYVALFVFV. Positions 272–276 match the Histidine box-3 motif; that stretch reads HSLHH.

The protein belongs to the sterol desaturase family.

Its subcellular location is the endoplasmic reticulum membrane. It carries out the reaction episterol + 2 Fe(II)-[cytochrome b5] + O2 + 2 H(+) = 5-dehydroepisterol + 2 Fe(III)-[cytochrome b5] + 2 H2O. Its pathway is steroid metabolism; ergosterol biosynthesis. Its function is as follows. C-5 sterol desaturase; part of the third module of ergosterol biosynthesis pathway that includes the late steps of the pathway. ERG3A and ERG3BB catalyze the introduction of a C-5 double bond in the B ring to produce 5-dehydroepisterol. The third module or late pathway involves the ergosterol synthesis itself through consecutive reactions that mainly occur in the endoplasmic reticulum (ER) membrane. Firstly, the squalene synthase ERG9 catalyzes the condensation of 2 farnesyl pyrophosphate moieties to form squalene, which is the precursor of all steroids. Squalene synthase is crucial for balancing the incorporation of farnesyl diphosphate (FPP) into sterol and nonsterol isoprene synthesis. Secondly, squalene is converted into lanosterol by the consecutive action of the squalene epoxidase ERG1 and the lanosterol synthase ERG7. Then, the delta(24)-sterol C-methyltransferase ERG6 methylates lanosterol at C-24 to produce eburicol. Eburicol is the substrate of the sterol 14-alpha demethylase encoded by CYP51A, CYP51B and CYP51C, to yield 4,4,24-trimethyl ergosta-8,14,24(28)-trienol. CYP51B encodes the enzyme primarily responsible for sterol 14-alpha-demethylation, and plays an essential role in ascospore formation. CYP51A encodes an additional sterol 14-alpha-demethylase, induced on ergosterol depletion and responsible for the intrinsic variation in azole sensitivity. The third CYP51 isoform, CYP51C, does not encode a sterol 14-alpha-demethylase, but is required for full virulence on host wheat ears. The C-14 reductase ERG24 then reduces the C14=C15 double bond which leads to 4,4-dimethylfecosterol. A sequence of further demethylations at C-4, involving the C-4 demethylation complex containing the C-4 methylsterol oxidases ERG25, the sterol-4-alpha-carboxylate 3-dehydrogenase ERG26 and the 3-keto-steroid reductase ERG27, leads to the production of fecosterol via 4-methylfecosterol. ERG28 has a role as a scaffold to help anchor ERG25, ERG26 and ERG27 to the endoplasmic reticulum. The C-8 sterol isomerase ERG2 then catalyzes the reaction which results in unsaturation at C-7 in the B ring of sterols and thus converts fecosterol to episterol. The sterol-C5-desaturases ERG3A and ERG3BB then catalyze the introduction of a C-5 double bond in the B ring to produce 5-dehydroepisterol. The C-22 sterol desaturases ERG5A and ERG5B further convert 5-dehydroepisterol into ergosta-5,7,22,24(28)-tetraen-3beta-ol by forming the C-22(23) double bond in the sterol side chain. Finally, ergosta-5,7,22,24(28)-tetraen-3beta-ol is substrate of the C-24(28) sterol reductase ERG4 to produce ergosterol. This chain is Delta(7)-sterol 5(6)-desaturase ERG3A, found in Gibberella zeae (strain ATCC MYA-4620 / CBS 123657 / FGSC 9075 / NRRL 31084 / PH-1) (Wheat head blight fungus).